The primary structure comprises 172 residues: Small ribosomal subunit protein uS5 (172 aa).

Residues 17 to 80 (LREKMISVNR…DEARRKMVKV (64 aa)) enclose the S5 DRBM domain.

This sequence belongs to the universal ribosomal protein uS5 family. As to quaternary structure, part of the 30S ribosomal subunit. Contacts proteins S4 and S8.

In terms of biological role, with S4 and S12 plays an important role in translational accuracy. Its function is as follows. Located at the back of the 30S subunit body where it stabilizes the conformation of the head with respect to the body. The protein is Small ribosomal subunit protein uS5 of Cupriavidus pinatubonensis (strain JMP 134 / LMG 1197) (Cupriavidus necator (strain JMP 134)).